The primary structure comprises 143 residues: 3-dehydroquinate dehydratase (143 aa).

Residue Tyr22 is the Proton acceptor of the active site. The substrate site is built by Asn73, His79, and Asp86. Catalysis depends on His99, which acts as the Proton donor. Substrate contacts are provided by residues 100-101 (IS) and Arg110.

This sequence belongs to the type-II 3-dehydroquinase family. As to quaternary structure, homododecamer.

It catalyses the reaction 3-dehydroquinate = 3-dehydroshikimate + H2O. It participates in metabolic intermediate biosynthesis; chorismate biosynthesis; chorismate from D-erythrose 4-phosphate and phosphoenolpyruvate: step 3/7. In terms of biological role, catalyzes a trans-dehydration via an enolate intermediate. This Mycolicibacterium paratuberculosis (strain ATCC BAA-968 / K-10) (Mycobacterium paratuberculosis) protein is 3-dehydroquinate dehydratase.